Here is a 71-residue protein sequence, read N- to C-terminus: Sec-independent protein translocase protein TatA (71 aa).

Residues 9 to 29 (LLLILAIVVILFGASRLPALG) traverse the membrane as a helical segment. A disordered region spans residues 43–71 (FGGEDEKPTASGNGSTPTQSSSDQGSKQA). The segment covering 52 to 71 (ASGNGSTPTQSSSDQGSKQA) has biased composition (polar residues).

Belongs to the TatA/E family. As to quaternary structure, the Tat system comprises two distinct complexes: a TatABC complex, containing multiple copies of TatA, TatB and TatC subunits, and a separate TatA complex, containing only TatA subunits. Substrates initially bind to the TatABC complex, which probably triggers association of the separate TatA complex to form the active translocon.

The protein resides in the cell inner membrane. Its function is as follows. Part of the twin-arginine translocation (Tat) system that transports large folded proteins containing a characteristic twin-arginine motif in their signal peptide across membranes. TatA could form the protein-conducting channel of the Tat system. The polypeptide is Sec-independent protein translocase protein TatA (Anaeromyxobacter dehalogenans (strain 2CP-C)).